A 314-amino-acid chain; its full sequence is Homoserine O-acetyltransferase (314 aa).

Cysteine 142 (acyl-thioester intermediate) is an active-site residue. The substrate site is built by lysine 163 and serine 192. Histidine 235 (proton acceptor) is an active-site residue. The active site involves glutamate 237. Residue arginine 249 participates in substrate binding.

The protein belongs to the MetA family.

It localises to the cytoplasm. The catalysed reaction is L-homoserine + acetyl-CoA = O-acetyl-L-homoserine + CoA. It participates in amino-acid biosynthesis; L-methionine biosynthesis via de novo pathway; O-acetyl-L-homoserine from L-homoserine: step 1/1. Functionally, transfers an acetyl group from acetyl-CoA to L-homoserine, forming acetyl-L-homoserine. This chain is Homoserine O-acetyltransferase, found in Streptococcus pneumoniae serotype 4 (strain ATCC BAA-334 / TIGR4).